A 337-amino-acid polypeptide reads, in one-letter code: tRNA N6-adenosine threonylcarbamoyltransferase (337 aa).

Residues His110 and His114 each coordinate Fe cation. Substrate contacts are provided by residues 133–137 (MVSGG), Asp166, Gly179, Asp183, and Asn276. A Fe cation-binding site is contributed by Asp302.

Belongs to the KAE1 / TsaD family. It depends on Fe(2+) as a cofactor.

It is found in the cytoplasm. It carries out the reaction L-threonylcarbamoyladenylate + adenosine(37) in tRNA = N(6)-L-threonylcarbamoyladenosine(37) in tRNA + AMP + H(+). Required for the formation of a threonylcarbamoyl group on adenosine at position 37 (t(6)A37) in tRNAs that read codons beginning with adenine. Is involved in the transfer of the threonylcarbamoyl moiety of threonylcarbamoyl-AMP (TC-AMP) to the N6 group of A37, together with TsaE and TsaB. TsaD likely plays a direct catalytic role in this reaction. This is tRNA N6-adenosine threonylcarbamoyltransferase from Fervidobacterium nodosum (strain ATCC 35602 / DSM 5306 / Rt17-B1).